The primary structure comprises 455 residues: Protein chibby homolog 2 (455 aa).

A phosphoserine mark is found at Ser41, Ser86, Ser89, Ser97, Ser124, Ser144, Ser148, and Ser150. Positions 160-197 (KRLAKECLLQENKTLREENRALREENRMLRKENKILQV) form a coiled coil. Phosphoserine is present on residues Ser211 and Ser225. A coiled-coil region spans residues 240 to 266 (GRENSTLQLLREENRALQQLLEQRKAY). Positions 267 to 318 (WAQPDEKAASTEEIKPISSPHEEPHGLLPDPGPGLPSPFEEPKGLPAPPDDS) are disordered. The span at 270–291 (PDEKAASTEEIKPISSPHEEPH) shows a compositional bias: basic and acidic residues. A phosphoserine mark is found at Ser276 and Ser332. Positions 350-421 (SQSLELLREM…KLKLQQKLVI (72 aa)) form a coiled coil.

This sequence belongs to the chibby family. SPERT subfamily. As to quaternary structure, homodimer. Binds to NEK1.

This chain is Protein chibby homolog 2 (CBY2), found in Bos taurus (Bovine).